Here is a 212-residue protein sequence, read N- to C-terminus: Lipopolysaccharide core heptose(II)-phosphate phosphatase (212 aa).

Positions 1 to 32 are cleaved as a signal peptide; sequence MSIGGVYELAFCRSSLKSKKYFIILLALAAIA.

The protein belongs to the phosphoglycerate mutase family. Ais subfamily.

The protein localises to the periplasm. Its pathway is bacterial outer membrane biogenesis; lipopolysaccharide metabolism. Catalyzes the dephosphorylation of heptose(II) of the outer membrane lipopolysaccharide core. The sequence is that of Lipopolysaccharide core heptose(II)-phosphate phosphatase from Shigella boydii serotype 4 (strain Sb227).